The following is a 212-amino-acid chain: MSEISGIRREYTLGELHNEEVPSDPMDLFNAWLEVIRDSDIKDPTAMSVATVDENGQPFQRIVLLKRFDNHGFVFFTNLESRKAQHIANNAQVSILFPWHSLDKQVAVTGIAEPLSKTEVLKYFMSRPKESQIASWVSKQSSPISARKALESKFAEMKAKFSQGDVPLPKFWGGYLVRPKSIEFWQGGEHRLHDRFIYTKKEESWEHTRLAP.

Residues 8-11 and Lys-66 each bind substrate; that span reads RREY. Residues 61–66, 76–77, Arg-82, Lys-83, and Gln-105 contribute to the FMN site; these read RIVLLK and FT. The substrate site is built by Tyr-123, Arg-127, and Ser-131. FMN is bound by residues 140–141 and Trp-185; that span reads QS. A substrate-binding site is contributed by 191–193; that stretch reads RLH. An FMN-binding site is contributed by Arg-195.

The protein belongs to the pyridoxamine 5'-phosphate oxidase family. In terms of assembly, homodimer. The cofactor is FMN.

The catalysed reaction is pyridoxamine 5'-phosphate + O2 + H2O = pyridoxal 5'-phosphate + H2O2 + NH4(+). It carries out the reaction pyridoxine 5'-phosphate + O2 = pyridoxal 5'-phosphate + H2O2. Its pathway is cofactor metabolism; pyridoxal 5'-phosphate salvage; pyridoxal 5'-phosphate from pyridoxamine 5'-phosphate: step 1/1. The protein operates within cofactor metabolism; pyridoxal 5'-phosphate salvage; pyridoxal 5'-phosphate from pyridoxine 5'-phosphate: step 1/1. Functionally, catalyzes the oxidation of either pyridoxine 5'-phosphate (PNP) or pyridoxamine 5'-phosphate (PMP) into pyridoxal 5'-phosphate (PLP). This chain is Pyridoxine/pyridoxamine 5'-phosphate oxidase, found in Shewanella pealeana (strain ATCC 700345 / ANG-SQ1).